Here is a 146-residue protein sequence, read N- to C-terminus: Negative cofactor 2 complex subunit beta (146 aa).

Positions 124–146 (FRQSRSRLHHNSVSDPVKSEDSS) are disordered. Phosphoserine is present on residues Ser135, Ser137, and Ser142.

As to quaternary structure, component of the NC2 (negative cofactor 2) complex composed of BUR6 and NCB2. The NC2 complex associates with SPT15/TBP. Interacts with SPT15/TBP.

The protein resides in the nucleus. In terms of biological role, component of the NC2 complex which represses RNA polymerase II transcription through binding to SPT15/TBP and thereby inhibiting the assembly of the preinitiation complex. The NC2 complex may also mediate transcriptional activation from TATA-driven promoters through association with SPT15/TBP. The protein is Negative cofactor 2 complex subunit beta (NCB2) of Saccharomyces cerevisiae (strain ATCC 204508 / S288c) (Baker's yeast).